We begin with the raw amino-acid sequence, 140 residues long: Nucleoside diphosphate kinase (140 aa).

ATP is bound by residues Lys-11, Phe-59, Arg-87, Thr-93, Arg-104, and Asn-114. The active-site Pros-phosphohistidine intermediate is the His-117.

It belongs to the NDK family. In terms of assembly, homotetramer. Mg(2+) is required as a cofactor.

Its subcellular location is the cytoplasm. It catalyses the reaction a 2'-deoxyribonucleoside 5'-diphosphate + ATP = a 2'-deoxyribonucleoside 5'-triphosphate + ADP. It carries out the reaction a ribonucleoside 5'-diphosphate + ATP = a ribonucleoside 5'-triphosphate + ADP. In terms of biological role, major role in the synthesis of nucleoside triphosphates other than ATP. The ATP gamma phosphate is transferred to the NDP beta phosphate via a ping-pong mechanism, using a phosphorylated active-site intermediate. The chain is Nucleoside diphosphate kinase from Azorhizobium caulinodans (strain ATCC 43989 / DSM 5975 / JCM 20966 / LMG 6465 / NBRC 14845 / NCIMB 13405 / ORS 571).